The chain runs to 248 residues: Stress-related protein (248 aa).

The protein belongs to the REF/SRPP family.

The polypeptide is Stress-related protein (SRP) (Vitis riparia (Frost grape)).